Consider the following 628-residue polypeptide: Biosynthetic arginine decarboxylase (628 aa).

Lys-99 carries the N6-(pyridoxal phosphate)lysine modification. Position 279–289 (279–289 (VDVGGGLGIDY)) interacts with substrate.

Belongs to the Orn/Lys/Arg decarboxylase class-II family. SpeA subfamily. Requires Mg(2+) as cofactor. Pyridoxal 5'-phosphate is required as a cofactor.

The enzyme catalyses L-arginine + H(+) = agmatine + CO2. Catalyzes the biosynthesis of agmatine from arginine. This is Biosynthetic arginine decarboxylase from Xanthomonas axonopodis pv. citri (strain 306).